Reading from the N-terminus, the 334-residue chain is DNA-directed RNA polymerase subunit alpha (334 aa).

Positions 1-234 (MQRSLNEFLT…QQLAVFVDFD (234 aa)) are alpha N-terminal domain (alpha-NTD). An alpha C-terminal domain (alpha-CTD) region spans residues 248–334 (IDPILLRPVD…IRGDDRVLGG (87 aa)).

It belongs to the RNA polymerase alpha chain family. As to quaternary structure, homodimer. The RNAP catalytic core consists of 2 alpha, 1 beta, 1 beta' and 1 omega subunit. When a sigma factor is associated with the core the holoenzyme is formed, which can initiate transcription.

The enzyme catalyses RNA(n) + a ribonucleoside 5'-triphosphate = RNA(n+1) + diphosphate. Its function is as follows. DNA-dependent RNA polymerase catalyzes the transcription of DNA into RNA using the four ribonucleoside triphosphates as substrates. This chain is DNA-directed RNA polymerase subunit alpha, found in Hahella chejuensis (strain KCTC 2396).